The following is a 472-amino-acid chain: uncharacterized protein (472 aa).

2 stretches are compositionally biased toward low complexity: residues 1–21 (MAFSSSSLRRSLKLGRGSRPG) and 63–74 (ASSLPAPASSSP). Positions 1–74 (MAFSSSSLRR…SLPAPASSSP (74 aa)) are disordered.

This is an uncharacterized protein from Equus caballus (Horse).